The sequence spans 652 residues: Adhesion G protein-coupled receptor E3 (652 aa).

The first 21 residues, 1–21, serve as a signal peptide directing secretion; that stretch reads MQGPLLLPGLCFLLSLFGAVT. The Extracellular portion of the chain corresponds to 22 to 357; sequence QKTKTSCAKC…TSQEEDPVLT (336 aa). An EGF-like 1 domain is found at 24 to 66; sequence TKTSCAKCPPNASCVNNTHCTCNHGYTSGSGQKLFTFPLETCN. Cystine bridges form between cysteine 28–cysteine 37, cysteine 31–cysteine 43, cysteine 45–cysteine 65, cysteine 71–cysteine 85, cysteine 79–cysteine 94, and cysteine 96–cysteine 117. Residues asparagine 34 and asparagine 39 are each glycosylated (N-linked (GlcNAc...) asparagine). The region spanning 67–118 is the EGF-like 2; calcium-binding domain; that stretch reads DINECTPPYSVYCGFNAVCYNVEGSFYCQCVPGYRLHSGNEQFSNSNENTCQ. Asparagine 145, asparagine 189, asparagine 202, asparagine 250, asparagine 279, asparagine 327, and asparagine 334 each carry an N-linked (GlcNAc...) asparagine glycan. A GAIN-B domain is found at 183–351; sequence KVLKIQNDSV…AVLMALTSQE (169 aa). 2 cysteine pairs are disulfide-bonded: cysteine 304/cysteine 333 and cysteine 321/cysteine 335. Residues 304 to 351 are GPS; the sequence is CVYWKSTGQGSQWSRDGCFLIHVNKSHTMCNCSHLSSFAVLMALTSQE. A helical membrane pass occupies residues 358–378; sequence VITYVGLSVSLLCLLLAALTF. The Cytoplasmic portion of the chain corresponds to 379–389; that stretch reads LLCKAIRNTST. Residues 390–410 traverse the membrane as a helical segment; it reads SLHLQLSLCLFLAHLLFLVGI. Topologically, residues 411 to 416 are extracellular; that stretch reads DRTEPK. The chain crosses the membrane as a helical span at residues 417-437; that stretch reads VLCSIIAGALHYLYLAAFTWM. The Cytoplasmic portion of the chain corresponds to 438–464; sequence LLEGVHLFLTARNLTVVNYSSINRLMK. Residues 465–485 form a helical membrane-spanning segment; that stretch reads WIMFPVGYGVPAVTVAISAAS. Residues 486–508 lie on the Extracellular side of the membrane; the sequence is WPHLYGTADRCWLHLDQGFMWSF. The helical transmembrane segment at 509–529 threads the bilayer; that stretch reads LGPVCAIFSANLVLFILVFWI. Residues 530–557 are Cytoplasmic-facing; that stretch reads LKRKLSSLNSEVSTIQNTRMLAFKATAQ. Residues 558–578 traverse the membrane as a helical segment; that stretch reads LFILGCTWCLGLLQVGPAAQV. Over 579–580 the chain is Extracellular; it reads MA. Residues 581–601 form a helical membrane-spanning segment; it reads YLFTIINSLQGFFIFLVYCLL. Topologically, residues 602–652 are cytoplasmic; sequence SQQVQKQYQKWFREIVKSKSESETYTLSSKMGPDSKPSEGDVFPGQVKRKY. Positions 621–652 are disordered; it reads SESETYTLSSKMGPDSKPSEGDVFPGQVKRKY.

Belongs to the G-protein coupled receptor 2 family. Adhesion G-protein coupled receptor (ADGR) subfamily. Forms a heterodimer, consisting of a large extracellular region (alpha subunit) non-covalently linked to a seven-transmembrane moiety (beta subunit). Post-translationally, proteolytically cleaved into 2 subunits, an extracellular alpha subunit and a seven-transmembrane subunit. As to expression, displays a predominantly leukocyte-restricted expression, with highest levels in neutrophils, monocytes and macrophages.

The protein resides in the cell membrane. It localises to the secreted. In terms of biological role, orphan receptor that may play a role myeloid-myeloid interactions during immune and inflammatory responses. A ligand for the soluble form of this receptor is present at the surface of monocytes-derived macrophages and activated neutrophils. The sequence is that of Adhesion G protein-coupled receptor E3 from Homo sapiens (Human).